We begin with the raw amino-acid sequence, 356 residues long: MTICTDIIANGYDLKTLIYNSGVVSIKVIALIICLLLATAYLTFAERKVIAYMQLRVGPSLAGPFGLLQPIADAIKLVFKEPIIPAKADRKLFIIAPIITFVLSLLGWSVIPIDHDIVLSRIHIGGILFILAVTSLGVYGIIIAGWASNSKYAFLGAVRSAAQMISYELAMALSIVAVLIVTGEMDLIQIVEAQKTRPIWLTIMMLPLAVIYFISILAKTNRLPFDLPEAESELVAGYNVEYSSMAFAMFFLGEYANMILGSSLMTIMFLGGYLPPFNLEILTFIPGYIWFILKVSMVLFCFLWIRATLPRYRYDQLMYLGLKVFLPIVLAWIIVVSTILVYSNNLPIALETVLNK.

Transmembrane regions (helical) follow at residues 22–42 (GVVS…TAYL), 59–79 (PSLA…KLVF), 93–113 (FIIA…VIPI), 124–144 (IGGI…IIIA), 171–191 (MALS…IQIV), 198–218 (PIWL…SILA), 240–260 (VEYS…NMIL), 285–305 (IPGY…FLWI), and 321–341 (GLKV…TILV).

The protein belongs to the complex I subunit 1 family. In terms of assembly, NDH-1 is composed of 14 different subunits. Subunits NuoA, H, J, K, L, M, N constitute the membrane sector of the complex.

The protein localises to the cell inner membrane. The enzyme catalyses a quinone + NADH + 5 H(+)(in) = a quinol + NAD(+) + 4 H(+)(out). Its function is as follows. NDH-1 shuttles electrons from NADH, via FMN and iron-sulfur (Fe-S) centers, to quinones in the respiratory chain. The immediate electron acceptor for the enzyme in this species is believed to be ubiquinone. Couples the redox reaction to proton translocation (for every two electrons transferred, four hydrogen ions are translocated across the cytoplasmic membrane), and thus conserves the redox energy in a proton gradient. This subunit may bind ubiquinone. In Orientia tsutsugamushi (strain Boryong) (Rickettsia tsutsugamushi), this protein is NADH-quinone oxidoreductase subunit H.